A 117-amino-acid polypeptide reads, in one-letter code: uncharacterized protein (117 aa).

A signal peptide spans 1–24 (MMTEFGSAMTLVTGLVAYGAYVKS). Residues 42-117 (EKENFNYNNN…NNQIKRRLFD (76 aa)) are disordered. Low complexity predominate over residues 46–95 (FNYNNNNNNNNNNNNNNSNNNDNNNNNNSNSNNNNNNNNNNNNNNNNNIN). N-linked (GlcNAc...) asparagine glycosylation is found at N61 and N72. Residues 96–110 (DKQINGTNIFDSNNQ) are compositionally biased toward polar residues.

The protein localises to the secreted. This is an uncharacterized protein from Dictyostelium discoideum (Social amoeba).